Reading from the N-terminus, the 366-residue chain is uncharacterized protein (366 aa).

This is an uncharacterized protein from Methanocaldococcus jannaschii (strain ATCC 43067 / DSM 2661 / JAL-1 / JCM 10045 / NBRC 100440) (Methanococcus jannaschii).